We begin with the raw amino-acid sequence, 649 residues long: Threonine--tRNA ligase (649 aa).

One can recognise a TGS domain in the interval 1 to 63; that stretch reads MSSIKITFPD…KEDGSIEIIT (63 aa). Positions 245–543 are catalytic; that stretch reads DHRVIGNELD…LTEMYKGAFP (299 aa). Zn(2+)-binding residues include C339, H390, and H520.

Belongs to the class-II aminoacyl-tRNA synthetase family. Homodimer. It depends on Zn(2+) as a cofactor.

It is found in the cytoplasm. The enzyme catalyses tRNA(Thr) + L-threonine + ATP = L-threonyl-tRNA(Thr) + AMP + diphosphate + H(+). Catalyzes the attachment of threonine to tRNA(Thr) in a two-step reaction: L-threonine is first activated by ATP to form Thr-AMP and then transferred to the acceptor end of tRNA(Thr). Also edits incorrectly charged L-seryl-tRNA(Thr). The chain is Threonine--tRNA ligase from Ligilactobacillus salivarius (strain UCC118) (Lactobacillus salivarius).